Here is a 141-residue protein sequence, read N- to C-terminus: 3-hydroxyacyl-[acyl-carrier-protein] dehydratase FabZ (141 aa).

H49 is an active-site residue.

The protein belongs to the thioester dehydratase family. FabZ subfamily.

It is found in the cytoplasm. It catalyses the reaction a (3R)-hydroxyacyl-[ACP] = a (2E)-enoyl-[ACP] + H2O. Its function is as follows. Involved in unsaturated fatty acids biosynthesis. Catalyzes the dehydration of short chain beta-hydroxyacyl-ACPs and long chain saturated and unsaturated beta-hydroxyacyl-ACPs. This Enterococcus faecalis (strain ATCC 700802 / V583) protein is 3-hydroxyacyl-[acyl-carrier-protein] dehydratase FabZ (fabZ2).